Consider the following 968-residue polypeptide: Glycine dehydrogenase (decarboxylating) (968 aa).

N6-(pyridoxal phosphate)lysine is present on lysine 713.

The protein belongs to the GcvP family. As to quaternary structure, the glycine cleavage system is composed of four proteins: P, T, L and H. Pyridoxal 5'-phosphate serves as cofactor.

It carries out the reaction N(6)-[(R)-lipoyl]-L-lysyl-[glycine-cleavage complex H protein] + glycine + H(+) = N(6)-[(R)-S(8)-aminomethyldihydrolipoyl]-L-lysyl-[glycine-cleavage complex H protein] + CO2. The glycine cleavage system catalyzes the degradation of glycine. The P protein binds the alpha-amino group of glycine through its pyridoxal phosphate cofactor; CO(2) is released and the remaining methylamine moiety is then transferred to the lipoamide cofactor of the H protein. The protein is Glycine dehydrogenase (decarboxylating) of Variovorax paradoxus (strain S110).